Consider the following 304-residue polypeptide: MEKFELHILGCGSALPTTRHFATSQVVNLRDKLFMIDCGEGAQMQLRKSRLKFSRLNHIFISHLHGDHCFGLMGLISTFGLLGRTAELHIHSPKGLEELLTPMLNFFCHTLAYKVIFHEFDTRQTSVVYEDRSMTVTTIPLQHRIPCCGFLFAEKARPNHIIRDMVDFYKVPVYELNRIKNGSDYVTPEGEVIANTRLTRPSDPPRKYAYCSDTIFRPEIVKQLSGVDLLFHEATFAESELARAKETYHTTAAQAARIALEAGVRQLVIGHFSARYEDESILLKEASAVFPNTILAKENLCISL.

Zn(2+) is bound by residues His-63, His-65, Asp-67, His-68, His-143, Asp-213, and His-271. The Proton acceptor role is filled by Asp-67.

It belongs to the RNase Z family. As to quaternary structure, homodimer. The cofactor is Zn(2+).

The catalysed reaction is Endonucleolytic cleavage of RNA, removing extra 3' nucleotides from tRNA precursor, generating 3' termini of tRNAs. A 3'-hydroxy group is left at the tRNA terminus and a 5'-phosphoryl group is left at the trailer molecule.. In terms of biological role, zinc phosphodiesterase, which displays some tRNA 3'-processing endonuclease activity. Probably involved in tRNA maturation, by removing a 3'-trailer from precursor tRNA. In Bacteroides fragilis (strain ATCC 25285 / DSM 2151 / CCUG 4856 / JCM 11019 / LMG 10263 / NCTC 9343 / Onslow / VPI 2553 / EN-2), this protein is Ribonuclease Z.